The chain runs to 260 residues: DNA-binding protein RFXANK (260 aa).

Residues 1-79 (MELTQPAEDL…STTLTNRQRG (79 aa)) are disordered. Residues 22-33 (GDPEDPGEEAAD) are compositionally biased toward acidic residues. Positions 57-77 (SVSSPQAGSSLKHSTTLTNRQ) are enriched in polar residues. 5 ANK repeats span residues 89–118 (LDSLSIHQLAAQGELDQLKEHLRKGDNLVN), 123–152 (RGFTPLIWASAFGEIETVRFLLEWGADPHI), 156–185 (ERESALSLASTGGYTDIVGLLLERDVDINI), 189–218 (NGGTPLLYAVRGNHVKCVEALLARGADLTT), and 222–251 (SGYTPMDLAVALGYRKVQQVIENHILKLFQ).

In terms of assembly, forms homodimers. The RFX heterotetrameric complex consists of 2 molecules of RFX5 and one each of RFXAP and RFX-B/RFXANK; with each subunit representing a separate complementation group. Interacts (via ankyrin repeats) with RFX5 (via PxLPxI/L motif); the interaction is direct. RFX forms cooperative DNA binding complexes with X2BP and CBF/NF-Y. RFX associates with CIITA to form an active transcriptional complex. Interacts with RAF1. Interacts (via ankyrin repeats) with RFX7 (via PxLPxI/L motif). In terms of processing, phosphorylated by RAF1. In terms of tissue distribution, ubiquitous.

Its subcellular location is the cytoplasm. The protein localises to the nucleus. Activates transcription from class II MHC promoters. Activation requires the activity of the MHC class II transactivator/CIITA. May regulate other genes in the cell. RFX binds the X1 box of MHC-II promoters. May also potentiate the activation of RAF1. In terms of biological role, isoform 2 is not involved in the positive regulation of MHC class II genes. This chain is DNA-binding protein RFXANK (RFXANK), found in Homo sapiens (Human).